A 426-amino-acid chain; its full sequence is Bifunctional protein GlmU (426 aa).

Positions 1 to 216 (MSEVDVVILA…WHDILGVNTQ (216 aa)) are pyrophosphorylase. UDP-N-acetyl-alpha-D-glucosamine-binding positions include 9–12 (LAAG), K23, and Q69. Mg(2+) is bound at residue D97. Residues G132, E148, N163, and N214 each coordinate UDP-N-acetyl-alpha-D-glucosamine. N214 is a Mg(2+) binding site. The interval 217–237 (QQLAAVSKIARKRINDQIMAN) is linker. The tract at residues 238-426 (GVTMIDPLTT…AKHDQRDDQP (189 aa)) is N-acetyltransferase. UDP-N-acetyl-alpha-D-glucosamine contacts are provided by R286 and K304. H316 (proton acceptor) is an active-site residue. Residues Y319 and N330 each contribute to the UDP-N-acetyl-alpha-D-glucosamine site. Acetyl-CoA is bound by residues A333, 339–340 (NY), S358, A376, and R393.

In the N-terminal section; belongs to the N-acetylglucosamine-1-phosphate uridyltransferase family. The protein in the C-terminal section; belongs to the transferase hexapeptide repeat family. Homotrimer. Mg(2+) serves as cofactor.

It localises to the cytoplasm. It catalyses the reaction alpha-D-glucosamine 1-phosphate + acetyl-CoA = N-acetyl-alpha-D-glucosamine 1-phosphate + CoA + H(+). The enzyme catalyses N-acetyl-alpha-D-glucosamine 1-phosphate + UTP + H(+) = UDP-N-acetyl-alpha-D-glucosamine + diphosphate. Its pathway is nucleotide-sugar biosynthesis; UDP-N-acetyl-alpha-D-glucosamine biosynthesis; N-acetyl-alpha-D-glucosamine 1-phosphate from alpha-D-glucosamine 6-phosphate (route II): step 2/2. It functions in the pathway nucleotide-sugar biosynthesis; UDP-N-acetyl-alpha-D-glucosamine biosynthesis; UDP-N-acetyl-alpha-D-glucosamine from N-acetyl-alpha-D-glucosamine 1-phosphate: step 1/1. It participates in bacterial outer membrane biogenesis; LPS lipid A biosynthesis. In terms of biological role, catalyzes the last two sequential reactions in the de novo biosynthetic pathway for UDP-N-acetylglucosamine (UDP-GlcNAc). The C-terminal domain catalyzes the transfer of acetyl group from acetyl coenzyme A to glucosamine-1-phosphate (GlcN-1-P) to produce N-acetylglucosamine-1-phosphate (GlcNAc-1-P), which is converted into UDP-GlcNAc by the transfer of uridine 5-monophosphate (from uridine 5-triphosphate), a reaction catalyzed by the N-terminal domain. This chain is Bifunctional protein GlmU, found in Oenococcus oeni (strain ATCC BAA-331 / PSU-1).